A 417-amino-acid polypeptide reads, in one-letter code: Tumor necrosis factor receptor superfamily member 25 (417 aa).

An N-terminal signal peptide occupies residues 1 to 24 (MEQRPRGCAAVAAALLLVLLGARA). The Extracellular portion of the chain corresponds to 25-199 (QGGTRSPRCD…RCAAVCGWRQ (175 aa)). 4 TNFR-Cys repeats span residues 34–71 (DCAGDFHKKIGLFCCRGCPAGHYLKAPCTEPCGNSTCL), 72–115 (VCPQ…DTRC), 116–163 (GCKP…TDCG), and 164–192 (TCLPGFYEHGDGCVSCPTSTLGSCPERCA). Disulfide bonds link Cys-35-Cys-47, Cys-48-Cys-61, Cys-51-Cys-70, Cys-73-Cys-89, Cys-92-Cys-107, Cys-95-Cys-115, Cys-117-Cys-130, Cys-138-Cys-155, Cys-141-Cys-162, Cys-165-Cys-176, Cys-179-Cys-191, and Cys-187-Cys-195. N-linked (GlcNAc...) asparagine glycosylation is present at Asn-67. Asn-106 carries N-linked (GlcNAc...) asparagine glycosylation. A helical transmembrane segment spans residues 200-220 (MFWVQVLLAGLVVPLLLGATL). Residues 221 to 417 (TYTYRHCWPH…DLRSRLQRGP (197 aa)) lie on the Cytoplasmic side of the membrane. In terms of domain architecture, Death spans 332 to 413 (GPQLYDVMDA…GCVEDLRSRL (82 aa)). Arg-352 is a glycosylation site ((Microbial infection) N-beta-linked (GlcNAc) arginine).

In terms of assembly, homodimer. Interacts strongly via the death domains with TNFRSF1 and TRADD to activate at least two distinct signaling cascades, apoptosis and NF-kappa-B signaling. Interacts with BAG4. Post-translationally, (Microbial infection) Glycosylated at Arg-352 by enteropathogenic E.coli protein NleB1. Glycosylated. As to expression, abundantly expressed in thymocytes and lymphocytes. Detected in lymphocyte-rich tissues such as thymus, colon, intestine, and spleen. Also found in the prostate.

The protein resides in the cell membrane. The protein localises to the secreted. In terms of biological role, receptor for TNFSF12/APO3L/TWEAK. Interacts directly with the adapter TRADD. Mediates activation of NF-kappa-B and induces apoptosis. May play a role in regulating lymphocyte homeostasis. This Homo sapiens (Human) protein is Tumor necrosis factor receptor superfamily member 25 (TNFRSF25).